Consider the following 1151-residue polypeptide: Semaphorin-5B (1151 aa).

The Extracellular portion of the chain corresponds to 1–1036 (MPCGFSPSPV…TDCAGFNLIH (1036 aa)). In terms of domain architecture, Sema spans 103–553 (HPTVAFEDLQ…LRDGVLRVPL (451 aa)). N-linked (GlcNAc...) asparagine glycosylation is present at asparagine 153. 2 disulfide bridges follow: cysteine 172–cysteine 182 and cysteine 199–cysteine 208. 2 N-linked (GlcNAc...) asparagine glycosylation sites follow: asparagine 236 and asparagine 345. 2 disulfide bridges follow: cysteine 322/cysteine 425 and cysteine 346/cysteine 388. The N-linked (GlcNAc...) asparagine glycan is linked to asparagine 436. The PSI domain occupies 555–602 (RCAAYRSQGACLGARDPYCGWDGKQQRCSTLEDSSNMSLWTQNITACP). 2 TSP type-1 domains span residues 664–720 (NGAW…TPCP) and 722–771 (PIFW…EGCP). Intrachain disulfides connect cysteine 676–cysteine 713, cysteine 680–cysteine 719, cysteine 691–cysteine 703, cysteine 734–cysteine 765, cysteine 738–cysteine 770, and cysteine 749–cysteine 755. A glycan (O-linked (GalNAc...) threonine) is linked at threonine 788. TSP type-1 domains are found at residues 853–908 (SGGW…QACP), 910–965 (RGAW…QACP), and 966–1010 (EGWS…RPCP). 6 disulfides stabilise this stretch: cysteine 865-cysteine 902, cysteine 869-cysteine 907, cysteine 880-cysteine 892, cysteine 922-cysteine 959, cysteine 926-cysteine 964, and cysteine 937-cysteine 949. Residues 1037-1057 (LVATGISCFLGSGLLTLAVYL) traverse the membrane as a helical; Signal-anchor for type III membrane protein segment. Residues 1058–1151 (SCQHCQRQSQ…SPGQRCFPNS (94 aa)) are Cytoplasmic-facing.

Belongs to the semaphorin family.

It is found in the membrane. Its function is as follows. May act as a positive axonal guidance cue. The sequence is that of Semaphorin-5B (SEMA5B) from Homo sapiens (Human).